Here is a 275-residue protein sequence, read N- to C-terminus: Polyamine aminopropyltransferase (275 aa).

The 234-residue stretch at 2 to 235 (HLWFTEKQND…AMWSFTIGSK (234 aa)) folds into the PABS domain. Gln-31 lines the S-methyl-5'-thioadenosine pocket. The spermidine site is built by His-62 and Asp-86. Residues Glu-106 and 137 to 138 (DG) each bind S-methyl-5'-thioadenosine. Asp-155 acts as the Proton acceptor in catalysis. A spermidine-binding site is contributed by 155–158 (DSTD). Pro-162 is a binding site for S-methyl-5'-thioadenosine.

It belongs to the spermidine/spermine synthase family. Homodimer or homotetramer.

The protein resides in the cytoplasm. The catalysed reaction is S-adenosyl 3-(methylsulfanyl)propylamine + putrescine = S-methyl-5'-thioadenosine + spermidine + H(+). It functions in the pathway amine and polyamine biosynthesis; spermidine biosynthesis; spermidine from putrescine: step 1/1. In terms of biological role, catalyzes the irreversible transfer of a propylamine group from the amino donor S-adenosylmethioninamine (decarboxy-AdoMet) to putrescine (1,4-diaminobutane) to yield spermidine. The protein is Polyamine aminopropyltransferase of Desulforudis audaxviator (strain MP104C).